The primary structure comprises 341 residues: MLSLSKNWNALIKTDKVSYESFPETNNKSKIIVEPLERGFGLTLGNAMRRVLLSSLQGAAVTSIKIPGIEHEFSSIPGVKEDISEIILNVKGIEIKMHVAEKRVIRLKATGPGAITAGMIEAGHDVEILNPDHVICNLAKNKQFEMELTCKVGKGYTLSTNNNEDNNLPIGEIAIDALFNPVKSVTYKVENTRIGQVTDYDKLIMFVETNGDILPEMAVGLAARILQEQLQLFISFEEQEEDKQVKTDALPFSPYLLKRVDELELSVRSANCLKNDNIIYIGDLVKRTEADMLRTPNFGRKSLNEIKEILAKFSLRFGMDVPDWPPENIHELSKRYEDSYN.

The segment at 1 to 237 is alpha N-terminal domain (alpha-NTD); it reads MLSLSKNWNA…EQLQLFISFE (237 aa). The segment at 247–341 is alpha C-terminal domain (alpha-CTD); sequence TDALPFSPYL…LSKRYEDSYN (95 aa).

This sequence belongs to the RNA polymerase alpha chain family. Homodimer. The RNAP catalytic core consists of 2 alpha, 1 beta, 1 beta' and 1 omega subunit. When a sigma factor is associated with the core the holoenzyme is formed, which can initiate transcription.

The catalysed reaction is RNA(n) + a ribonucleoside 5'-triphosphate = RNA(n+1) + diphosphate. Functionally, DNA-dependent RNA polymerase catalyzes the transcription of DNA into RNA using the four ribonucleoside triphosphates as substrates. The sequence is that of DNA-directed RNA polymerase subunit alpha from Rickettsia bellii (strain RML369-C).